The sequence spans 601 residues: RNA polymerase II C-terminal domain phosphatase-like 5 (601 aa).

Residues 1 to 20 (MFVAKNLSPERESKRQKKEP) form a disordered region. Residues 8–20 (SPERESKRQKKEP) show a composition bias toward basic and acidic residues. FCP1 homology domains follow at residues 84–259 (LNMK…TDES) and 381–553 (LNEK…DESE).

In terms of tissue distribution, expressed in roots, seedlings, hypocotyls, cotyledons, leaves, siliques and flowers.

Its subcellular location is the nucleus. It catalyses the reaction O-phospho-L-seryl-[protein] + H2O = L-seryl-[protein] + phosphate. The enzyme catalyses O-phospho-L-threonyl-[protein] + H2O = L-threonyl-[protein] + phosphate. Its function is as follows. Mediates the dephosphorylation of 'Ser-2' of the heptad repeats YSPTSPS in the C-terminal domain of the largest RNA polymerase II subunit (RPB1). This promotes the activity of RNA polymerase II. Positively regulates abscisic acid (ABA) and drought responses, including the regulation of specific genes expression. This is RNA polymerase II C-terminal domain phosphatase-like 5 from Arabidopsis thaliana (Mouse-ear cress).